The following is a 179-amino-acid chain: Inner membrane-spanning protein YciB (179 aa).

5 consecutive transmembrane segments (helical) span residues 22–42, 50–70, 76–96, 121–141, and 149–169; these read IYAATSALIVATAIVLIYSWV, MALITFVLVAVFGGLTIFFHN, WKVTVIYGLFAGALLISQWVM, LAWAVFFILCGLANIYIAFWL, and FKVFGLTALTLIFTLLSGVYI.

Belongs to the YciB family.

It is found in the cell inner membrane. Its function is as follows. Plays a role in cell envelope biogenesis, maintenance of cell envelope integrity and membrane homeostasis. This Citrobacter koseri (strain ATCC BAA-895 / CDC 4225-83 / SGSC4696) protein is Inner membrane-spanning protein YciB.